The following is a 554-amino-acid chain: Potassium-transporting ATPase potassium-binding subunit (554 aa).

12 helical membrane passes run proline 3 to valine 23, proline 60 to leucine 80, glycine 131 to valine 151, valine 174 to isoleucine 194, leucine 252 to methionine 272, glycine 279 to tryptophan 299, phenylalanine 323 to valine 343, glycine 352 to valine 372, glycine 375 to glycine 395, phenylalanine 412 to methionine 432, leucine 481 to glycine 501, and leucine 522 to alanine 542.

It belongs to the KdpA family. As to quaternary structure, the system is composed of three essential subunits: KdpA, KdpB and KdpC.

The protein localises to the cell membrane. Part of the high-affinity ATP-driven potassium transport (or Kdp) system, which catalyzes the hydrolysis of ATP coupled with the electrogenic transport of potassium into the cytoplasm. This subunit binds the extracellular potassium ions and delivers the ions to the membrane domain of KdpB through an intramembrane tunnel. This chain is Potassium-transporting ATPase potassium-binding subunit, found in Streptomyces coelicolor (strain ATCC BAA-471 / A3(2) / M145).